Here is a 361-residue protein sequence, read N- to C-terminus: Hsc70-interacting protein (361 aa).

The disordered stretch occupies residues glycine 39–glycine 98. The span at glutamate 53 to glutamate 71 shows a compositional bias: basic and acidic residues. The segment covering proline 72–glycine 98 has biased composition (acidic residues). 3 TPR repeats span residues alanine 112 to leucine 145, isoleucine 147 to serine 179, and glutamine 181 to glutamate 213. A compositionally biased stretch (basic and acidic residues) spans lysine 254–arginine 270. The disordered stretch occupies residues lysine 254–methionine 292. Positions alanine 275–methionine 292 are enriched in gly residues. One can recognise an STI1 domain in the interval aspartate 311 to isoleucine 350.

The protein belongs to the FAM10 family. In terms of assembly, homotetramer. Interacts with HSC70 as well as DNAJ homologs and HSP90.

It is found in the cytoplasm. Its function is as follows. One HIP oligomer binds the ATPase domains of at least two HSC70 molecules dependent on activation of the HSC70 ATPase by HSP40. Stabilizes the ADP state of HSC70 that has a high affinity for substrate protein. Through its own chaperone activity, it may contribute to the interaction of HSC70 with various target proteins. The chain is Hsc70-interacting protein (ST13) from Gallus gallus (Chicken).